The chain runs to 433 residues: Glutamate-1-semialdehyde 2,1-aminomutase (433 aa).

An N6-(pyridoxal phosphate)lysine modification is found at Lys273.

This sequence belongs to the class-III pyridoxal-phosphate-dependent aminotransferase family. HemL subfamily. As to quaternary structure, homodimer. It depends on pyridoxal 5'-phosphate as a cofactor.

The protein resides in the cytoplasm. It catalyses the reaction (S)-4-amino-5-oxopentanoate = 5-aminolevulinate. Its pathway is porphyrin-containing compound metabolism; protoporphyrin-IX biosynthesis; 5-aminolevulinate from L-glutamyl-tRNA(Glu): step 2/2. The polypeptide is Glutamate-1-semialdehyde 2,1-aminomutase (Ralstonia nicotianae (strain ATCC BAA-1114 / GMI1000) (Ralstonia solanacearum)).